A 345-amino-acid chain; its full sequence is Pectin lyase (345 aa).

Positions 1-24 (MKRFCLWFAVFSLLLVLLPGKAFG) are cleaved as a signal peptide. The active site involves Arg-234.

It belongs to the polysaccharide lyase 1 family.

It localises to the secreted. It catalyses the reaction Eliminative cleavage of (1-&gt;4)-alpha-D-galacturonan methyl ester to give oligosaccharides with 4-deoxy-6-O-methyl-alpha-D-galact-4-enuronosyl groups at their non-reducing ends.. Inhibited by Hg(2+) and Mn(2+). Not affected by EDTA in vitro. In terms of biological role, catalyzes the depolymerization of pectins of methyl esterification degree from 13 to 75%, with an endo mode of action. Cannot degrade polygalacturonate. Also displays protopectinase activity, i.e. releases pectin from protopectin. This is Pectin lyase (pelB) from Bacillus subtilis.